The primary structure comprises 412 residues: rRNA methyltransferase 1, mitochondrial (412 aa).

The transit peptide at methionine 1–histidine 20 directs the protein to the mitochondrion.

It belongs to the class IV-like SAM-binding methyltransferase superfamily. RNA methyltransferase TrmH family.

It is found in the mitochondrion. It carries out the reaction guanosine(2270) in 21S rRNA + S-adenosyl-L-methionine = 2'-O-methylguanosine(2270) in 21S rRNA + S-adenosyl-L-homocysteine + H(+). Its function is as follows. S-adenosyl-L-methionine-dependent 2'-O-ribose methyltransferase that catalyzes the formation of 2'-O-methylguanosine at position 2270 (Gm2270) in the 21S mitochondrial large subunit ribosomal RNA (mtLSU rRNA), a universally conserved modification in the peptidyl transferase domain of the mtLSU rRNA. This modification seems to be important for the normal accumulation of the mitochondrial large ribosomal subunit. This chain is rRNA methyltransferase 1, mitochondrial, found in Saccharomyces cerevisiae (strain ATCC 204508 / S288c) (Baker's yeast).